The chain runs to 407 residues: MPVNLVAPDPASLLPVPGVRLGIASAGIKKAGRRDLTLIELAPGSRVAGVFTQNRFCAAPVTVCREHLTRGDVRALVINTGNANAGTGDEGLDRARRTCSAVADLFAVDATQVLPFSTGVILEPLPIDKILPALPAAHADLAAGHWSEAAAAIMTTDIVAKGASRQLQIDGRTITVTGIAKGSGMIHPNMATMLGFVATDAAIAPALMQRMVRDVADVSFNCVTVDGDTSTNDSFILIATGQAGNAEIADAGTDYSALKAALADVAIELAQAMARDGEGATKFMTIAVEGGRDRAECKQIAYAIARSPLVKTAFFASDPNLGRILAAIGYAGVQDLDVNALKVWLGDVLVAEAGGRAAGYSEAAAAAVMKAAEITVRVSLARGDARATVWTCDFSYDYVKINAEYRT.

Substrate-binding residues include Thr-155, Lys-181, Thr-192, Glu-278, Asn-402, and Thr-407. Thr-192 functions as the Nucleophile in the catalytic mechanism.

The protein belongs to the ArgJ family. In terms of assembly, heterotetramer of two alpha and two beta chains.

Its subcellular location is the cytoplasm. It catalyses the reaction N(2)-acetyl-L-ornithine + L-glutamate = N-acetyl-L-glutamate + L-ornithine. The enzyme catalyses L-glutamate + acetyl-CoA = N-acetyl-L-glutamate + CoA + H(+). Its pathway is amino-acid biosynthesis; L-arginine biosynthesis; L-ornithine and N-acetyl-L-glutamate from L-glutamate and N(2)-acetyl-L-ornithine (cyclic): step 1/1. The protein operates within amino-acid biosynthesis; L-arginine biosynthesis; N(2)-acetyl-L-ornithine from L-glutamate: step 1/4. In terms of biological role, catalyzes two activities which are involved in the cyclic version of arginine biosynthesis: the synthesis of N-acetylglutamate from glutamate and acetyl-CoA as the acetyl donor, and of ornithine by transacetylation between N(2)-acetylornithine and glutamate. The protein is Arginine biosynthesis bifunctional protein ArgJ of Thiobacillus denitrificans (strain ATCC 25259 / T1).